The following is a 91-amino-acid chain: Salivary lectin pathway inhibitor (91 aa).

Residues 1–21 (MGLTETTLVLVSLAFFASAVA) form the signal peptide. N-linked (GlcNAc...) asparagine glycans are attached at residues Asn-26 and Asn-87.

It belongs to the salp14 family. In terms of processing, glycosylated; deglycosylation largely abrogates the complement inhibitory effect. In terms of tissue distribution, nymph salivary gland (at protein level). Saliva (at protein level). Not detected in midgut.

It is found in the secreted. Inhibits the lectin pathway of complement system activation in the host by reducing binding of mannose-binding lectin and L-ficolin to their ligands. Does not affect the classical and alternative pathways of complement system activation in the host. Its function is as follows. (Microbial infection) Protects Borrelia garinii (strain A87S) from host complement-mediated killing by preventing deposition of host C5b-9 membrane attack complexes on the surface of spirochetes. Inhibits phagocytosis of B.garinii (strain A87S) by human neutrophils. Impairs Borrelia-induced complement-mediated chemotaxis of human polymorphonuclear leukocytes. In terms of biological role, (Microbial infection) Protects Borrelia burgdorferi (strain N40), which is resistant to normal human serum, from Borrelia-opsonizing antibody-mediated complement-dependent killing. The polypeptide is Salivary lectin pathway inhibitor (Ixodes scapularis (Black-legged tick)).